The following is a 492-amino-acid chain: Transmembrane protein 39B (492 aa).

The disordered stretch occupies residues 1-53; sequence MGGRRGPNRTSYYRNPLCEPGSSGASGGGHSSSASVSSVRSRSRTTSGTGLSS. Residue Asn-8 is glycosylated (N-linked (GlcNAc...) asparagine). Residues 31 to 53 are compositionally biased toward low complexity; that stretch reads SSSASVSSVRSRSRTTSGTGLSS. The next 8 helical transmembrane spans lie at 77–97, 115–135, 153–175, 185–205, 288–308, 322–342, 421–441, and 447–467; these read SILF…VHYI, TSLN…IVLG, SLFR…GWSL, TYSF…IPFL, EVLV…VWFV, LFLL…LPAS, ILNI…YSLM, and HQTI…FKLL.

The protein belongs to the TMEM39 family.

Its subcellular location is the endoplasmic reticulum membrane. Functionally, may protect the cells against DNA damage caused by exposure to the cold-warming stress and facilitates tissue damage repair during the recovery phase. The chain is Transmembrane protein 39B from Rattus norvegicus (Rat).